Consider the following 223-residue polypeptide: HTH-type transcriptional dual regulator CecR (223 aa).

The HTH tetR-type domain occupies Glu-11–Ile-70. Residues Thr-33 to Phe-52 constitute a DNA-binding region (H-T-H motif).

It is found in the cytoplasm. In terms of biological role, regulates transcription of the cecR-ybhGFSR operon and the rhlE gene, which altogether are involved in the control of sensitivity to cefoperazone and chloramphenicol. Represses the cecR-ybhGFSR operon and activates the rhlE operon. Acts by binding to a palindromic sequence within the intergenic spacer located between these two divergently transcribed operons. The chain is HTH-type transcriptional dual regulator CecR from Shigella flexneri.